The following is a 422-amino-acid chain: Growth arrest-specific protein 7 (422 aa).

The tract at residues Met-1 to Asn-117 is disordered. The region spanning Val-22–Ser-55 is the WW domain. The span at Val-41–Arg-52 shows a compositional bias: polar residues. Residues Pro-53 to Pro-65 are compositionally biased toward low complexity. Residues Ser-62 and Ser-108 each carry the phosphoserine modification. Over residues Arg-95–Asn-117 the composition is skewed to polar residues. Positions Thr-141–Asp-402 constitute an F-BAR domain. Positions Glu-254 to Leu-329 form a coiled coil.

The protein resides in the cytoplasm. Its function is as follows. May play a role in promoting maturation and morphological differentiation of cerebellar neurons. This is Growth arrest-specific protein 7 (Gas7) from Rattus norvegicus (Rat).